The chain runs to 971 residues: Xylanolytic transcriptional activator xlnR (971 aa).

Disordered stretches follow at residues 1-25 (MSTT…PVGM) and 55-123 (GASA…PVRR). Over residues 9–18 (FTSSFSPFSS) the composition is skewed to low complexity. The segment covering 67-96 (LRSSISKPQGQQLYSDESSAQHTQNATTGF) has biased composition (polar residues). The zn(2)-C6 fungal-type DNA-binding region spans 129 to 155 (CDQCNQLRTKCDGQNPCAHCIEFGLTC). Composition is skewed to polar residues over residues 182-199 (NGTA…SVSS), 227-241 (NLAT…QHSD), and 249-260 (QGSQQTPHSQPS). 3 disordered regions span residues 182-263 (NGTA…SLGG), 295-316 (LHPS…GMNS), and 580-610 (RELP…NLPP).

Belongs to the xlnR/xlr1 family.

Its subcellular location is the nucleus. In terms of biological role, transcriptional activator of the xylanolytic system. Involved in the regulation of extracellular cellulolytic and xylanolytic genes and in the regulation of the intracellular activities of D-xylose catabolic genes in the pentose catabolic pathway (PCP) in response to the presence of D-xylose. This is Xylanolytic transcriptional activator xlnR (xlnR) from Aspergillus flavus (strain ATCC 200026 / FGSC A1120 / IAM 13836 / NRRL 3357 / JCM 12722 / SRRC 167).